The primary structure comprises 899 residues: Translation initiation factor IF-2 (899 aa).

3 disordered regions span residues 115-137, 170-189, and 262-309; these read EAKA…LQTE, RGGG…EQKK, and DREI…HGFE. The region spanning 399–568 is the tr-type G domain; it reads TRPPVVTIMG…LIQSELMELK (170 aa). Residues 408–415 form a G1 region; the sequence is GHVDHGKT. 408–415 serves as a coordination point for GTP; the sequence is GHVDHGKT. Residues 433 to 437 form a G2 region; sequence GITQH. The segment at 454 to 457 is G3; the sequence is DTPG. Residues 454–458 and 508–511 contribute to the GTP site; these read DTPGH and NKMD. The tract at residues 508 to 511 is G4; sequence NKMD. Residues 544–546 form a G5 region; that stretch reads SAH.

It belongs to the TRAFAC class translation factor GTPase superfamily. Classic translation factor GTPase family. IF-2 subfamily.

Its subcellular location is the cytoplasm. In terms of biological role, one of the essential components for the initiation of protein synthesis. Protects formylmethionyl-tRNA from spontaneous hydrolysis and promotes its binding to the 30S ribosomal subunits. Also involved in the hydrolysis of GTP during the formation of the 70S ribosomal complex. The protein is Translation initiation factor IF-2 of Acinetobacter baumannii (strain SDF).